A 235-amino-acid chain; its full sequence is Elongation factor Tu, chloroplastic (235 aa).

Positions 1–125 (KNMITGAAQM…KVDSYIPTPQ (125 aa)) constitute a tr-type G domain. Residue 47-50 (NKED) participates in GTP binding.

It belongs to the TRAFAC class translation factor GTPase superfamily. Classic translation factor GTPase family. EF-Tu/EF-1A subfamily.

The protein resides in the plastid. It is found in the chloroplast. It catalyses the reaction GTP + H2O = GDP + phosphate + H(+). GTP hydrolase that promotes the GTP-dependent binding of aminoacyl-tRNA to the A-site of ribosomes during protein biosynthesis. The sequence is that of Elongation factor Tu, chloroplastic (tufA) from Gonium pectorale (Green alga).